Here is a 138-residue protein sequence, read N- to C-terminus: Basic phospholipase A2 vurtoxin (138 aa).

An N-terminal signal peptide occupies residues methionine 1 to glycine 16. Disulfide bonds link cysteine 42–cysteine 131, cysteine 44–cysteine 60, cysteine 59–cysteine 111, cysteine 65–cysteine 138, cysteine 66–cysteine 104, cysteine 73–cysteine 97, and cysteine 91–cysteine 102. Residues tyrosine 43, glycine 45, and glycine 47 each coordinate Ca(2+). Histidine 63 is an active-site residue. Aspartate 64 provides a ligand contact to Ca(2+). The active site involves aspartate 105.

The cofactor is Ca(2+). Expressed by the venom gland.

The protein resides in the secreted. The catalysed reaction is a 1,2-diacyl-sn-glycero-3-phosphocholine + H2O = a 1-acyl-sn-glycero-3-phosphocholine + a fatty acid + H(+). Functionally, snake venom phospholipase A2 that may have a strong anticoagulant activity. Is able to suppress the acetylcholine (ACh)-evoked current mediated by alpha-7 (CHRNA7)-similar nAChRs in L.stagnalis neurons (IC(50)=10.5 uM) and to compete with alpha-bungarotoxin for binding to muscle- and alpha-7 neuronal nAChR types, as well as to AChBPs. In inhibition of alpha-bungarotoxin binding, this toxin is mostly active against T.californica nAChR (IC(50)=0.26 uM), it is moderately active against human alpha-7 nAChR (IC(50)=14 uM), and is not active against L.stagnalis and A.californica AChBP (IC(50)&gt;30 uM). The sequence is that of Basic phospholipase A2 vurtoxin from Vipera renardi (Steppe viper).